Here is a 187-residue protein sequence, read N- to C-terminus: MIVLGVDPGSRKTGYGVIAEAEGRLSVLGCGLIRPAASGTLHERIGQLCSGLEEVIANMKPEAVALETAFVGRNVRSALILGQVRGAVLATVIKLGLPVREYAPREIKLAVTGTGAARKEQVASMLPRLLGLEEAPKPLDVTDALGIAYCDLSRGASLTGHCGMTGSGKSRSKGWAAFVDAHPELLA.

Catalysis depends on residues Asp7, Glu67, and Asp140. The Mg(2+) site is built by Asp7, Glu67, and Asp140.

It belongs to the RuvC family. In terms of assembly, homodimer which binds Holliday junction (HJ) DNA. The HJ becomes 2-fold symmetrical on binding to RuvC with unstacked arms; it has a different conformation from HJ DNA in complex with RuvA. In the full resolvosome a probable DNA-RuvA(4)-RuvB(12)-RuvC(2) complex forms which resolves the HJ. Mg(2+) is required as a cofactor.

The protein resides in the cytoplasm. It carries out the reaction Endonucleolytic cleavage at a junction such as a reciprocal single-stranded crossover between two homologous DNA duplexes (Holliday junction).. In terms of biological role, the RuvA-RuvB-RuvC complex processes Holliday junction (HJ) DNA during genetic recombination and DNA repair. Endonuclease that resolves HJ intermediates. Cleaves cruciform DNA by making single-stranded nicks across the HJ at symmetrical positions within the homologous arms, yielding a 5'-phosphate and a 3'-hydroxyl group; requires a central core of homology in the junction. The consensus cleavage sequence is 5'-(A/T)TT(C/G)-3'. Cleavage occurs on the 3'-side of the TT dinucleotide at the point of strand exchange. HJ branch migration catalyzed by RuvA-RuvB allows RuvC to scan DNA until it finds its consensus sequence, where it cleaves and resolves the cruciform DNA. This Chlorobaculum parvum (strain DSM 263 / NCIMB 8327) (Chlorobium vibrioforme subsp. thiosulfatophilum) protein is Crossover junction endodeoxyribonuclease RuvC.